The primary structure comprises 535 residues: Flavin-containing monooxygenase iboF (535 aa).

The first 24 residues, 1–24, serve as a signal peptide directing secretion; that stretch reads MFSLRPTALVSLSVVLFSIQETLS. 60–65 contributes to the FAD binding site; sequence GAGPSG. Residues Asn-134, Asn-243, and Asn-300 are each glycosylated (N-linked (GlcNAc...) asparagine). 307 to 312 is an NADP(+) binding site; that stretch reads GAAASG. 3 N-linked (GlcNAc...) asparagine glycosylation sites follow: Asn-356, Asn-382, and Asn-410.

It belongs to the FMO family. The cofactor is FAD.

It functions in the pathway secondary metabolite biosynthesis. Functionally, flavin-containing monooxygenase; part of the gene cluster that mediates the biosynthesis of the psychoactive metabolites ibotenic acid and muscimol. The first committed step is glutamate hydroxylation by the 2-oxoglutarate-dependent dioxygenase iboH, and the last step is decarboxylation of ibotenic acid to muscimol by the decarboxylase iboD. The order of the intermediate reactions is somewhat ambiguous. IboA likely activates the carboxylic acid at position 5 to introduce an amide bond, and the flavin monooxygenase iboF generates the N-O bond. There are several options for the latter step. One option is that iboF directly hydroxylates the amide nitrogen formed by iboA to produce a hydroxamic acid species. Another option is that iboF hydroxylates an external N-containing compound, whose resulting N-O bond is subsequently introduced into the hydroxyglutamate scaffold. The paralogous PLP-dependent cystathionine gamma-synthase-like enzymes iboG1 and iboG2 are likely involved in substitution of the OH group at position 3 by the O-N moiety. The first cyclic intermediate is most probably tricholomic acid which is likely desaturated to ibotenic acid by the cytochrome P450 monooxygenase iboC. The sequence is that of Flavin-containing monooxygenase iboF from Amanita muscaria (strain Koide BX008).